The chain runs to 116 residues: Large ribosomal subunit protein uL22 (116 aa).

It belongs to the universal ribosomal protein uL22 family. As to quaternary structure, part of the 50S ribosomal subunit.

Its function is as follows. This protein binds specifically to 23S rRNA; its binding is stimulated by other ribosomal proteins, e.g. L4, L17, and L20. It is important during the early stages of 50S assembly. It makes multiple contacts with different domains of the 23S rRNA in the assembled 50S subunit and ribosome. The globular domain of the protein is located near the polypeptide exit tunnel on the outside of the subunit, while an extended beta-hairpin is found that lines the wall of the exit tunnel in the center of the 70S ribosome. The protein is Large ribosomal subunit protein uL22 of Gloeobacter violaceus (strain ATCC 29082 / PCC 7421).